We begin with the raw amino-acid sequence, 962 residues long: Cohesin subunit psc3 (962 aa).

Residues 1–72 are disordered; that stretch reads MSESVTTGSD…GVNVKRSRRN (72 aa). Residues 21 to 30 are compositionally biased toward polar residues; it reads VMLSQSFDPM. The segment covering 51-71 has biased composition (basic residues); the sequence is SSKKRHPRPNSKGVNVKRSRR. Residues 236–275 are a coiled coil; it reads LCEKSKELLNEHAIATKQLEKEEKRSRVNRNRINELNNSL. Residues 297-382 enclose the SCD domain; it reads FVHRYRDVEP…SRFKERILEM (86 aa).

Belongs to the SCC3 family. Cohesin complexes are composed of the psm1/smc1 and psm3/smc3 heterodimer attached via their hinge domain, rad21/scc1 which link them, and psc3/scc3, which interacts with rad21. Interacts with swi6. The interaction with swi6 may contribute to recruit cohesin complex to heterochromatin.

It localises to the nucleus. The protein resides in the chromosome. The protein localises to the centromere. Component of cohesin complex, a complex required for the cohesion of sister chromatids after DNA replication. The cohesin complex apparently forms a large proteinaceous ring within which sister chromatids can be trapped. At anaphase, the rad21 subunit of the cohesin complex is cleaved and dissociates from chromatin, allowing sister chromatids to segregate. The cohesin complex may also play a role in spindle pole assembly during mitosis. The polypeptide is Cohesin subunit psc3 (psc3) (Schizosaccharomyces pombe (strain 972 / ATCC 24843) (Fission yeast)).